The chain runs to 368 residues: Alanine racemase (368 aa).

K40 (proton acceptor; specific for D-alanine) is an active-site residue. K40 is subject to N6-(pyridoxal phosphate)lysine. Substrate is bound at residue R136. The Proton acceptor; specific for L-alanine role is filled by Y263. M310 serves as a coordination point for substrate.

It belongs to the alanine racemase family. Requires pyridoxal 5'-phosphate as cofactor.

It catalyses the reaction L-alanine = D-alanine. The protein operates within amino-acid biosynthesis; D-alanine biosynthesis; D-alanine from L-alanine: step 1/1. Catalyzes the interconversion of L-alanine and D-alanine. May also act on other amino acids. This is Alanine racemase (alr) from Streptococcus uberis (strain ATCC BAA-854 / 0140J).